A 452-amino-acid chain; its full sequence is UPF0210 protein Dred_1672 (452 aa).

Belongs to the UPF0210 family. In terms of assembly, homodimer.

The sequence is that of UPF0210 protein Dred_1672 from Desulforamulus reducens (strain ATCC BAA-1160 / DSM 100696 / MI-1) (Desulfotomaculum reducens).